Reading from the N-terminus, the 1728-residue chain is Hybrid PKS-NRPS synthetase TAS1 (1728 aa).

The tract at residues 153 to 499 (SPLSKAQMAL…MDPTLLDFKV (347 aa)) is condensation (C) domain. The interval 608-1002 (KARAASQPDL…KLHIQGRIGN (395 aa)) is adenylation (A) domain. The Carrier domain occupies 1141-1219 (MLRRHLTAEV…KQVDCLMGIV (79 aa)). Serine 1177 bears the O-(pantetheine 4'-phosphoryl)serine mark. A disordered region spans residues 1225 to 1256 (LGSEPTGGSSSRSQSRRSAETSSSSTSAPSSV). Low complexity-rich tracts occupy residues 1226 to 1237 (GSEPTGGSSSRS) and 1244 to 1255 (ETSSSSTSAPSS). A Ketosynthase family 3 (KS3) domain is found at 1262–1714 (RNLYAIVGIS…SDATWFVIST (453 aa)). Residues cysteine 1436, histidine 1579, and asparagine 1633 each act as for beta-ketoacyl synthase activity in the active site.

It in the N-terminal section; belongs to the NRP synthetase family. Requires pantetheine 4'-phosphate as cofactor.

It carries out the reaction acetoacetyl-CoA + L-isoleucine + ATP = tenuazonic acid + AMP + diphosphate + CoA + 2 H(+). Functionally, hybrid PKS-NRPS synthetase that mediates the biosynthesis of the toxin tenuazonic acid (TeA), an inhibitor of protein biosynthesis on ribosomes by suppressing the release of new protein. TAS1 alone is sufficient for TeA synthesis via the condensation of isoleucine (Ile) with acetoacetyl-CoA by the N-terminal NRPS module and subsequent cyclization conducted by the C-terminal KS domain. This Pyricularia oryzae (strain 70-15 / ATCC MYA-4617 / FGSC 8958) (Rice blast fungus) protein is Hybrid PKS-NRPS synthetase TAS1.